Consider the following 424-residue polypeptide: Serine hydroxymethyltransferase (424 aa).

(6S)-5,6,7,8-tetrahydrofolate is bound by residues leucine 118 and 122–124 (GHL). Residue lysine 227 is modified to N6-(pyridoxal phosphate)lysine. 351–353 (SPF) is a binding site for (6S)-5,6,7,8-tetrahydrofolate.

This sequence belongs to the SHMT family. As to quaternary structure, homodimer. Pyridoxal 5'-phosphate is required as a cofactor.

Its subcellular location is the cytoplasm. It catalyses the reaction (6R)-5,10-methylene-5,6,7,8-tetrahydrofolate + glycine + H2O = (6S)-5,6,7,8-tetrahydrofolate + L-serine. The protein operates within one-carbon metabolism; tetrahydrofolate interconversion. It functions in the pathway amino-acid biosynthesis; glycine biosynthesis; glycine from L-serine: step 1/1. Its function is as follows. Catalyzes the reversible interconversion of serine and glycine with tetrahydrofolate (THF) serving as the one-carbon carrier. This reaction serves as the major source of one-carbon groups required for the biosynthesis of purines, thymidylate, methionine, and other important biomolecules. Also exhibits THF-independent aldolase activity toward beta-hydroxyamino acids, producing glycine and aldehydes, via a retro-aldol mechanism. The sequence is that of Serine hydroxymethyltransferase from Thermosipho melanesiensis (strain DSM 12029 / CIP 104789 / BI429).